Consider the following 713-residue polypeptide: Polyribonucleotide nucleotidyltransferase (713 aa).

Residues Asp-493 and Asp-499 each contribute to the Mg(2+) site. The region spanning 560–619 (PRMITIKINPEKIRDVIGKGGSVIRALTEETGTTIDISDDGVVTIASTNSEGMAEAKKRI) is the KH domain. The S1 motif domain maps to 629–697 (GHVYEGTVLK…EKGRVRLSAK (69 aa)).

Belongs to the polyribonucleotide nucleotidyltransferase family. It depends on Mg(2+) as a cofactor.

Its subcellular location is the cytoplasm. The catalysed reaction is RNA(n+1) + phosphate = RNA(n) + a ribonucleoside 5'-diphosphate. Its function is as follows. Involved in mRNA degradation. Catalyzes the phosphorolysis of single-stranded polyribonucleotides processively in the 3'- to 5'-direction. The sequence is that of Polyribonucleotide nucleotidyltransferase from Burkholderia mallei (strain NCTC 10247).